A 332-amino-acid chain; its full sequence is UPF0194 membrane protein YbhG (332 aa).

The signal sequence occupies residues 1 to 16 (MMKKPVVIGLAVVVLA). Positions 108–209 (EEIAQAAAAV…LNLQDSTLIA (102 aa)) form a coiled coil.

The protein belongs to the UPF0194 family.

The protein resides in the periplasm. This chain is UPF0194 membrane protein YbhG, found in Escherichia coli O127:H6 (strain E2348/69 / EPEC).